A 365-amino-acid chain; its full sequence is Beta-parvin (365 aa).

The span at 1-12 shows a compositional bias: pro residues; the sequence is MSSAPPRSPTPR. The segment at 1 to 52 is disordered; sequence MSSAPPRSPTPRAPKMKKDESFLGKLGGTLARKKKTREVTDLQEEGKSAINS. A Phosphoserine modification is found at Ser-8. Positions 37–47 are enriched in basic and acidic residues; sequence REVTDLQEEGK. 2 consecutive Calponin-homology (CH) domains span residues 88–195 and 255–362; these read KELV…MHFR and NLVK…TKYK.

The protein belongs to the parvin family. In terms of assembly, interacts with ILK, ARHGEF6, PXN (via LD motifs), ACTN2 and actin. Interacts with DYSF. Post-translationally, phosphorylated by ILK. In terms of tissue distribution, expressed predominantly in heart and moderately in spleen, lung and skeletal muscle.

It localises to the cell junction. The protein resides in the focal adhesion. It is found in the cell membrane. The protein localises to the cytoplasm. Its subcellular location is the cytoskeleton. It localises to the cell projection. The protein resides in the lamellipodium. It is found in the myofibril. The protein localises to the sarcomere. Its subcellular location is the z line. Functionally, adapter protein that plays a role in integrin signaling via ILK and in activation of the GTPases CDC42 and RAC1 by guanine exchange factors, such as ARHGEF6. Is involved in the reorganization of the actin cytoskeleton and formation of lamellipodia. Plays a role in cell adhesion, cell spreading, establishment or maintenance of cell polarity, and cell migration. The protein is Beta-parvin (Parvb) of Mus musculus (Mouse).